The chain runs to 821 residues: MDTASPEEIDALKRHYLKKELFSLLIADELNFVSEPTNLDHLGSPFVEKGKSVIPYEKSQIPVLRFIFKRFILTFPFLDPDSQNQLWNVNFRNLLKSLSKSNVSVLPDDSDATHLHKWLLKFQNMLTLLMSRAFHSIQDEKNINIELLDTPKLEKDLHKSELQQKPNILEAYVLGVRQSTQAKMLRTKRVYEYLIKVSYEENTFFIARKYSDFSHFHHLLLKSYPNAYVPRLPPKDDHDTYLNSSEDSTLSPLPSRSSDTNDPQSDSQHVLRQERMRIELRQYIKNILNDDELHLTEEVLSFLTDDPVTLTASELTDINFRQELDVIRQLEQQKFVEIASQRAKELDVYMEEFKRSLTENNGFTTLFTELKEKNSISELSPSLQKTIEWARVNLASTIYDTFIGKEKSLETYLQIKKMHQLFPYTVIKNIMRFSNPLSVMKRILDTLLAQPFGMKSLFQRLLSISLNENVRAIHKLISRYEARIVSPEILTKIQEQVENPCKAAREVLEKKQMKRHDYLYFILISDDVPPKLPDNLIRRVYAERTAWKAALDSEDYPTDPTVIRRSKRYGYMMKLMHLYAKQFNKRRSISLISEGATGEIMKSMVDSPELNPNILVEQFIDLVRRHEDSFYDFVHRVYLHDSGLFASLMEWIENIIGFLRQGTSAPIDMDLVVDALDEESRQALDVELNKLLKWNQRKKSALFLRKTTKYIPGEETSLPVTMDELGIDEEIMAELRGDEDDQDENDQVTKVEEEHMEDDDSVEEFDPIIEERQRMKRKANRPANIIPPKPKLRTVKTLLPAFKEQVYPILHKFVSENEKDI.

In terms of domain architecture, PX spans 171-310 (AYVLGVRQST…SFLTDDPVTL (140 aa)). Positions 235–271 (KDDHDTYLNSSEDSTLSPLPSRSSDTNDPQSDSQHVL) are disordered. Residues 241-268 (YLNSSEDSTLSPLPSRSSDTNDPQSDSQ) show a composition bias toward polar residues. Residues Thr-260 and Thr-597 each carry the phosphothreonine modification. Composition is skewed to acidic residues over residues 737–746 (GDEDDQDEND) and 754–766 (EHME…EEFD). The segment at 737–766 (GDEDDQDENDQVTKVEEEHMEDDDSVEEFD) is disordered. Ser-761 is modified (phosphoserine).

The protein resides in the mitochondrion membrane. The protein is PX domain-containing protein C1450.12 of Schizosaccharomyces pombe (strain 972 / ATCC 24843) (Fission yeast).